The primary structure comprises 330 residues: uncharacterized protein (330 aa).

The ABC transporter domain maps to 4 to 242 (LSIQNLVVEY…AGEVLFEQST (239 aa)). 40–47 (GPSGCGKT) is an ATP binding site. Position 210-330 (210-330 (DRVVELTPDF…LIEHRALAND (121 aa))) interacts with a nucleoside 3',5'-cyclic phosphate.

This sequence belongs to the ABC transporter superfamily. The complex is composed of two ATP-binding proteins (MT0079), two transmembrane proteins (MT0078) and a solute-binding protein.

Its function is as follows. Probably part of an ABC transporter complex. Probably responsible for energy coupling to the transport system. This is an uncharacterized protein from Mycobacterium tuberculosis (strain CDC 1551 / Oshkosh).